The chain runs to 518 residues: Cytochrome P450 monooxygenase ARMGADRAFT_1018417 (518 aa).

The chain crosses the membrane as a helical span at residues L3–L23. C433 is a binding site for heme. N-linked (GlcNAc...) asparagine glycosylation occurs at N455.

It belongs to the cytochrome P450 family. Requires heme as cofactor.

It is found in the membrane. It participates in secondary metabolite biosynthesis. Its function is as follows. Cytochrome P450 monooxygenase, part of the gene cluster that mediates the biosynthesis of melleolides, a range of antifungal and phytotoxic polyketide derivatives composed of an orsellinic acid (OA) moiety esterified to various sesquiterpene alcohols. The first step in melleolides biosynthesis is performed by the delta(6)-protoilludene synthase PRO1 which catalyzes the cyclization of farnesyl diphosphate to protoilludene. The orsellinic acid synthase armB produces OA by condensing acetyl-CoA with 3 malonyl-CoA units in a three-round chain elongation reaction folowed by a C2-C7 ring closure. ArmB further catalyzes the trans-esterification of OA to the various sesquiterpene alcohols resulting from the hydroxylation of protoilludene. The melleolides cluster also includes 5 cytochrome P450 monooxygenases, 4 NAD(+)-dependent oxidoreductases, one flavin-dependent oxidoreductase, and one O-methyltransferase. The cytochrome P450 monooxygenases may be involved in protoilludene hydroxylation to elaborate melleolides with multiple alcohol groups, such as melleolide D, which carries alcohol functionalities at C-4, C-5, C-10, and C-13. The role of the NAD(+)-dependent enzymes remains unknown. Numerous melleolides, including arnamial, show 5'-O-methylation of the aromatic moiety which may be catalyzed by the methyltransferase encoded in the cluster. The flavin-dependent oxidoreductase might represent the dehydrogenase yielding the aldehyde in position 1 of arnamial and other melleolides. Finally, several halogenase localized outside of the cluster, are able to catalyze the transfer of a single chlorine atom to the melleolide backbone, resulting in a 6'-chloromelleolide product. The protein is Cytochrome P450 monooxygenase ARMGADRAFT_1018417 of Armillaria gallica (Bulbous honey fungus).